The following is a 142-amino-acid chain: Endoribonuclease YbeY (142 aa).

Zn(2+) is bound by residues His-107, His-111, and Asp-117.

Belongs to the endoribonuclease YbeY family. Zn(2+) serves as cofactor.

The protein resides in the cytoplasm. Its function is as follows. Single strand-specific metallo-endoribonuclease involved in late-stage 70S ribosome quality control and in maturation of the 3' terminus of the 16S rRNA. This Parabacteroides distasonis (strain ATCC 8503 / DSM 20701 / CIP 104284 / JCM 5825 / NCTC 11152) protein is Endoribonuclease YbeY.